Here is a 248-residue protein sequence, read N- to C-terminus: Large ribosomal subunit protein uL30A (248 aa).

Residues 1–44 (MSQKKQKIQVEQKVPENVAKKTQRDSKLRDAVAKRRTERLAANK) are disordered. Residues 8–41 (IQVEQKVPENVAKKTQRDSKLRDAVAKRRTERLA) show a composition bias toward basic and acidic residues.

This sequence belongs to the universal ribosomal protein uL30 family.

Functionally, binds to G-rich structures in 28S rRNA and in mRNAs. Plays a regulatory role in the translation apparatus; inhibits cell-free translation of mRNAs. This is Large ribosomal subunit protein uL30A (Rpl7-1) from Paramecium tetraurelia.